The sequence spans 188 residues: Probable manganese efflux pump MntP (188 aa).

The next 5 membrane-spanning stretches (helical) occupy residues 3–23 (ITATVLLAFGMSMDAFAASVG), 66–86 (LEWNHWIAFVLLIFLGGRMII), 106–128 (WLLVTTAIATSLDAMAVGVGLAF), 143–163 (ATLIMSTLGMMVGRFIGSIIG), and 168–188 (ILGGLVLIGIGVQILWTHFHG).

This sequence belongs to the MntP (TC 9.B.29) family.

The protein localises to the cell inner membrane. In terms of biological role, probably functions as a manganese efflux pump. This is Probable manganese efflux pump MntP from Shigella sonnei (strain Ss046).